We begin with the raw amino-acid sequence, 423 residues long: Aspartate--tRNA(Asp) ligase (423 aa).

Glu-163 is a binding site for L-aspartate. The aspartate stretch occupies residues 185-188; that stretch reads QLYK. Arg-207 serves as a coordination point for L-aspartate. ATP contacts are provided by residues 207–209, 215–217, and Glu-346; these read RAE and RHL. Residues Glu-346 and Ser-349 each coordinate Mg(2+). L-aspartate contacts are provided by Ser-349 and Arg-353. 394-397 serves as a coordination point for ATP; the sequence is GLER.

It belongs to the class-II aminoacyl-tRNA synthetase family. Type 2 subfamily. In terms of assembly, homodimer. Mg(2+) serves as cofactor.

It is found in the cytoplasm. It catalyses the reaction tRNA(Asp) + L-aspartate + ATP = L-aspartyl-tRNA(Asp) + AMP + diphosphate. Catalyzes the attachment of L-aspartate to tRNA(Asp) in a two-step reaction: L-aspartate is first activated by ATP to form Asp-AMP and then transferred to the acceptor end of tRNA(Asp). The chain is Aspartate--tRNA(Asp) ligase from Picrophilus torridus (strain ATCC 700027 / DSM 9790 / JCM 10055 / NBRC 100828 / KAW 2/3).